A 665-amino-acid chain; its full sequence is MKSLSVIFKPKSSPAKIYFPADRQASPDESHFISLIHACKDTASLRHVHAQILRRGVLSSRVAAQLVSCSSLLKSPDYSLSIFRNSEERNPFVLNALIRGLTENARFESSVRHFILMLRLGVKPDRLTFPFVLKSNSKLGFRWLGRALHAATLKNFVDCDSFVRLSLVDMYAKTGQLKHAFQVFEESPDRIKKESILIWNVLINGYCRAKDMHMATTLFRSMPERNSGSWSTLIKGYVDSGELNRAKQLFELMPEKNVVSWTTLINGFSQTGDYETAISTYFEMLEKGLKPNEYTIAAVLSACSKSGALGSGIRIHGYILDNGIKLDRAIGTALVDMYAKCGELDCAATVFSNMNHKDILSWTAMIQGWAVHGRFHQAIQCFRQMMYSGEKPDEVVFLAVLTACLNSSEVDLGLNFFDSMRLDYAIEPTLKHYVLVVDLLGRAGKLNEAHELVENMPINPDLTTWAALYRACKAHKGYRRAESVSQNLLELDPELCGSYIFLDKTHASKGNIQDVEKRRLSLQKRIKERSLGWSYIELDGQLNKFSAGDYSHKLTQEIGLKLDEIISLAIQKGYNPGADWSIHDIEEEEKENVTGIHSEKLALTLGFLRTAPGTTIRIIKNLRICGDCHSLMKYVSKISQRDILLRDARQFHHFKDGRCSCGDYW.

11 PPR repeats span residues 90 to 124, 125 to 155, 160 to 190, 195 to 229, 230 to 256, 257 to 291, 292 to 326, 327 to 357, 358 to 392, 393 to 423, and 429 to 459; these read NPFVLNALIRGLTENARFESSVRHFILMLRLGVKP, DRLTFPFVLKSNSKLGFRWLGRALHAATLKN, DSFVRLSLVDMYAKTGQLKHAFQVFEESPDR, SILIWNVLINGYCRAKDMHMATTLFRSMPERNSGS, WSTLIKGYVDSGELNRAKQLFELMPEK, NVVSWTTLINGFSQTGDYETAISTYFEMLEKGLKP, NEYTIAAVLSACSKSGALGSGIRIHGYILDNGIKL, DRAIGTALVDMYAKCGELDCAATVFSNMNHK, DILSWTAMIQGWAVHGRFHQAIQCFRQMMYSGEKP, DEVVFLAVLTACLNSSEVDLGLNFFDSMRLD, and TLKHYVLVVDLLGRAGKLNEAHELVENMPIN. The segment at 464–539 is type E motif; that stretch reads TWAALYRACK…SLGWSYIELD (76 aa). The interval 540 to 570 is type E(+) motif; that stretch reads GQLNKFSAGDYSHKLTQEIGLKLDEIISLAI. Residues 571–665 are type DYW motif; the sequence is QKGYNPGADW…DGRCSCGDYW (95 aa).

This sequence belongs to the PPR family. PCMP-H subfamily.

The chain is Pentatricopeptide repeat-containing protein At1g04840 (PCMP-H64) from Arabidopsis thaliana (Mouse-ear cress).